The following is a 565-amino-acid chain: Formate--tetrahydrofolate ligase (565 aa).

67–74 (TPLGEGKT) lines the ATP pocket.

Belongs to the formate--tetrahydrofolate ligase family.

It catalyses the reaction (6S)-5,6,7,8-tetrahydrofolate + formate + ATP = (6R)-10-formyltetrahydrofolate + ADP + phosphate. Its pathway is one-carbon metabolism; tetrahydrofolate interconversion. This Saccharopolyspora erythraea (strain ATCC 11635 / DSM 40517 / JCM 4748 / NBRC 13426 / NCIMB 8594 / NRRL 2338) protein is Formate--tetrahydrofolate ligase.